The sequence spans 512 residues: Pentatricopeptide repeat-containing protein At1g64583, mitochondrial (512 aa).

Residues 1–34 (MRRLIVTGIATSTAKGFRRVVNPNLLGGGAAARA) constitute a mitochondrion transit peptide. 12 PPR repeats span residues 70 to 104 (SIVD…GISH), 105 to 139 (DLYS…GYEP), 140 to 174 (SIVT…GYEP), 175 to 209 (NVVV…GLGA), 210 to 244 (DVVT…SINP), 245 to 279 (DVVT…SVDP), 280 to 314 (NNVT…GCFP), 315 to 349 (NVVT…GFNA), 350 to 384 (DIFT…RVTP), 385 to 415 (DIIT…MRES), 420 to 454 (GIVA…GVKP), and 455 to 489 (DART…GIIC).

The protein belongs to the PPR family. P subfamily.

It localises to the mitochondrion. The protein is Pentatricopeptide repeat-containing protein At1g64583, mitochondrial of Arabidopsis thaliana (Mouse-ear cress).